A 215-amino-acid polypeptide reads, in one-letter code: FGFR1 oncogene partner 2 homolog (215 aa).

Residues 35 to 183 (LLNKRVEAMK…SGLRELLGIS (149 aa)) adopt a coiled-coil conformation.

The protein belongs to the SIKE family.

It localises to the cytoplasm. The sequence is that of FGFR1 oncogene partner 2 homolog (fgfr1op2) from Danio rerio (Zebrafish).